A 246-amino-acid polypeptide reads, in one-letter code: MAGHSKWANIKHRKAAQDAQRGKIFTKLIRELVTAAKLGGGDVGANPRLRAAVDKALSNNMTRDTINRAIERGVGGGDGTNMETRIYEGYGPGGTAVMVECLSDNANRTISQVRPSFTKCGGNLGTEGSVGYLFSKKGLILVESADEDALTEAAIEAGADDIQVQEDGSVEIYTAWEDLGLVKDGIEVVGFKVVNAEVTMIPSTMVDLDAETAPKLLRLIDMLEDCDDVQNVYHNGEISDEVAALL.

The protein belongs to the TACO1 family.

Its subcellular location is the cytoplasm. The protein is Probable transcriptional regulatory protein HS_0508 of Histophilus somni (strain 129Pt) (Haemophilus somnus).